We begin with the raw amino-acid sequence, 719 residues long: Probable disease resistance protein At4g14610 (719 aa).

A coiled-coil region spans residues 25 to 73; that stretch reads SLPENLAALQKAIEVLKTKHDDVKRRVDKEEFLGRRHRLSQVQVEIERL. In terms of domain architecture, NB-ARC spans 114 to 418; that stretch reads EENLVAQVEE…NELEKILGCP (305 aa). 156 to 163 is an ATP binding site; the sequence is GMGGVGKT. LRR repeat units follow at residues 400-421, 422-444, and 447-469; these read AVRR…PTCP, QLTT…FFRF, and NLVV…ISEV.

This sequence belongs to the disease resistance NB-LRR family.

In terms of biological role, probable disease resistance protein. This chain is Probable disease resistance protein At4g14610, found in Arabidopsis thaliana (Mouse-ear cress).